We begin with the raw amino-acid sequence, 195 residues long: Magnetosome membrane protein 22 (195 aa).

Over residues 1–28 (MAAQTAASEAPAPAAAPADSPTTAGPTP) the composition is skewed to low complexity. Residues 1-31 (MAAQTAASEAPAPAAAPADSPTTAGPTPDSV) are disordered. The next 3 membrane-spanning stretches (helical) occupy residues 45 to 65 (VLAA…AAVV), 90 to 110 (SVIA…AVAV), and 115 to 135 (LIPG…AGAT).

It is found in the magnetosome membrane. The protein is Magnetosome membrane protein 22 of Magnetospirillum gryphiswaldense (strain DSM 6361 / JCM 21280 / NBRC 15271 / MSR-1).